A 612-amino-acid chain; its full sequence is MFNLEEELKKLPAKPGVYIMHDKWDNIIYIGKAKVLKNRVRQYFQSNRNKSAKIVQMVSHIQYFEYIITDSELEALVLECNLIKEHRPKYNTMLKDDKSYPFIKITVGEEYPRVLFARKMKHGAGKYFGPYTSAAAVKDTIELLCKLYKVRTCNRNLPKDEGRDRPCLNYHIGQCDAPCQGYVSGEEYRRRIDEVVAFLNGDYKKIMDRLTTQMQEASEKMEYEEAARYRDLLMSVKQVAQKQKITADDVNDRDVIACASDGQDAVVQVFFIRQGKLLGRDHFHMKVAEGDSKSDIISEFMKQYYGGTPFIPNIIMVQYEIEDADTIAQWLSARKSRKVSIVTPKKGDKEKMVELAYKNAQLVLTQDAEKIKREESRTTGAMKEIAGWLGLGTLHRAEAYDISNTNGVESVGSMVVFEDGKPKKNDYRKFRIRTVKGPDDYKSMREVLTRRFTRGMREREGLEDSHGFSRYPDLIMMDGGRGQVNIALDVLKELGLNIPVCGMVKDDTHSTRGLYYNNIEIPIDKHSEGFKLITRVQDEAHRFAITYHRSLRDKAQVSSVLDSIEGIGPVRRKALMKHFLDIEKIRQASVDELMKADGITENVAENIYKFFH.

Residues 13-92 (AKPGVYIMHD…IKEHRPKYNT (80 aa)) enclose the GIY-YIG domain. The 36-residue stretch at 204–239 (KKIMDRLTTQMQEASEKMEYEEAARYRDLLMSVKQV) folds into the UVR domain.

The protein belongs to the UvrC family. As to quaternary structure, interacts with UvrB in an incision complex.

The protein localises to the cytoplasm. In terms of biological role, the UvrABC repair system catalyzes the recognition and processing of DNA lesions. UvrC both incises the 5' and 3' sides of the lesion. The N-terminal half is responsible for the 3' incision and the C-terminal half is responsible for the 5' incision. The sequence is that of UvrABC system protein C from Lachnospira eligens (strain ATCC 27750 / DSM 3376 / VPI C15-48 / C15-B4) (Eubacterium eligens).